We begin with the raw amino-acid sequence, 372 residues long: MMHENPIKRRPSRRLYVGNVPIGDGAPIAVQSMTNTETTDVDATVAQIEALAQAGADIVRVSVPTMEAAEAFKQIKQRSPVPLVTDIHFDYRIALKVAEYGADCLRINPGNIGHEDRIKAVVDAARERNIPIRIGVNGGSLEKDLQEKYGEPTAEALVESAMRHVNILYKLDFYDFKVSVKASDVFLAVESYRLLAQKIDQPLHLGITEAGGKRSGAVKSSVGLGMLLAEGIGDTLRVSLAADPVEEIKVGFDILKSLRIRARGINFIACPSCSRQEFDVINTVNALEERLEDITIPMDVSIIGCVVNGPGEALVSHVGLAGAKNKSGLYIGGARQKLRLDNQNLVDELEAQIREQVKFIEANKIDVKEING.

[4Fe-4S] cluster-binding residues include cysteine 270, cysteine 273, cysteine 305, and glutamate 312.

It belongs to the IspG family. It depends on [4Fe-4S] cluster as a cofactor.

The enzyme catalyses (2E)-4-hydroxy-3-methylbut-2-enyl diphosphate + oxidized [flavodoxin] + H2O + 2 H(+) = 2-C-methyl-D-erythritol 2,4-cyclic diphosphate + reduced [flavodoxin]. The protein operates within isoprenoid biosynthesis; isopentenyl diphosphate biosynthesis via DXP pathway; isopentenyl diphosphate from 1-deoxy-D-xylulose 5-phosphate: step 5/6. Converts 2C-methyl-D-erythritol 2,4-cyclodiphosphate (ME-2,4cPP) into 1-hydroxy-2-methyl-2-(E)-butenyl 4-diphosphate. This Idiomarina loihiensis (strain ATCC BAA-735 / DSM 15497 / L2-TR) protein is 4-hydroxy-3-methylbut-2-en-1-yl diphosphate synthase (flavodoxin).